A 296-amino-acid chain; its full sequence is Ribosomal protein L11 methyltransferase (296 aa).

Threonine 145, glycine 166, aspartate 188, and asparagine 230 together coordinate S-adenosyl-L-methionine.

It belongs to the methyltransferase superfamily. PrmA family.

The protein localises to the cytoplasm. It carries out the reaction L-lysyl-[protein] + 3 S-adenosyl-L-methionine = N(6),N(6),N(6)-trimethyl-L-lysyl-[protein] + 3 S-adenosyl-L-homocysteine + 3 H(+). Functionally, methylates ribosomal protein L11. This chain is Ribosomal protein L11 methyltransferase, found in Histophilus somni (strain 2336) (Haemophilus somnus).